A 236-amino-acid polypeptide reads, in one-letter code: Alpha-acetolactate decarboxylase (236 aa).

This sequence belongs to the alpha-acetolactate decarboxylase family.

It catalyses the reaction (2S)-2-acetolactate + H(+) = (R)-acetoin + CO2. It participates in polyol metabolism; (R,R)-butane-2,3-diol biosynthesis; (R,R)-butane-2,3-diol from pyruvate: step 2/3. Functionally, converts acetolactate into acetoin. This Lactococcus lactis subsp. lactis (strain IL1403) (Streptococcus lactis) protein is Alpha-acetolactate decarboxylase (aldB).